A 186-amino-acid chain; its full sequence is CASP-like protein 4C2 (186 aa).

The Cytoplasmic segment spans residues 1 to 31 (MRSPQPHRSGGDTQQHFQSTVSVQKLKRFNS). A helical membrane pass occupies residues 32-52 (LILVFRFAAFCFSLASAVFML). The Extracellular portion of the chain corresponds to 53–71 (TNSRGSDSLHWYNFDAFRY). The helical transmembrane segment at 72-92 (VFAANAIVAIYSLFEMAASVW) threads the bilayer. The Cytoplasmic segment spans residues 93–103 (EISRNATLFPE). A helical membrane pass occupies residues 104 to 124 (ICQVWFDFGHDQVFAYLLLSA). Residues 125–150 (NTAGTELARTLKDTCTDNKAFCVQSD) are Extracellular-facing. The chain crosses the membrane as a helical span at residues 151–171 (IAIVLGFAGFLFLGISSLFSG). Residues 172–186 (FRVVCFIINGSRFYV) are Cytoplasmic-facing.

Belongs to the Casparian strip membrane proteins (CASP) family. Homodimer and heterodimers.

It is found in the cell membrane. The polypeptide is CASP-like protein 4C2 (Populus trichocarpa (Western balsam poplar)).